The sequence spans 1433 residues: Probable ATP-dependent RNA helicase spindle-E (1433 aa).

Residues 76–98 form a disordered region; sequence NRTLDELDSDDEEENMQEQPSVR. The segment covering 81–91 has biased composition (acidic residues); the sequence is ELDSDDEEENM. The Helicase ATP-binding domain occupies 127–294; the sequence is MKAIRENPVV…FATSSAFPPV (168 aa). Position 140 to 147 (140 to 147) interacts with ATP; that stretch reads GETGCGKT. The DEAH box signature appears at 240–243; the sequence is DEVH. The Helicase C-terminal domain occupies 354 to 526; the sequence is QSLQSYEEAK…NSVLKAKELE (173 aa). The Tudor domain maps to 937-1000; it reads ASAVTKGLQL…RLMPHELKRD (64 aa).

It belongs to the DEAD box helicase family. DEAH subfamily.

It is found in the cytoplasm. The enzyme catalyses ATP + H2O = ADP + phosphate + H(+). Probable ATP-binding RNA helicase which plays a central role during spermatogenesis and oogenesis by repressing transposable elements and preventing their mobilization, which is essential for the germline integrity. Acts via the piRNA metabolic process, which mediates the repression of transposable elements during meiosis by forming complexes composed of piRNAs and Piwi and govern the methylation and subsequent repression of transposons. Involved in the repression of LTR retrotransposon copia. Also involved in telomere regulation by repressing specialized telomeric retroelements HeT-A, TAHRE, and TART; Drosophila telomeres being maintained by transposition of specialized telomeric retroelements. Involved in telomeric trans-silencing, a repression mechanism by which a transposon or a transgene inserted in subtelomeric heterochromatin has the capacity to repress in trans in the female germline, a homologous transposon, or transgene located in euchromatin. Involved in the repression of testis-expressed Stellate genes by the homologous Su(Ste) repeats. Required for anteroposterior and dorsoventral axis formation during oogenesis. This Drosophila virilis (Fruit fly) protein is Probable ATP-dependent RNA helicase spindle-E (spn-E).